Here is a 282-residue protein sequence, read N- to C-terminus: ADP-ribosyl cyclase/cyclic ADP-ribose hydrolase (282 aa).

The first 24 residues, 1-24 (MSPVAIIACVCLAVTLTSISPSEA), serve as a signal peptide directing secretion. 5 cysteine pairs are disulfide-bonded: Cys-39-Cys-58, Cys-75-Cys-155, Cys-136-Cys-149, Cys-230-Cys-251, and Cys-263-Cys-272.

Belongs to the ADP-ribosyl cyclase family. In terms of processing, has different isoforms which may be the result of different amounts of phosphorylation. As to expression, immature occoyctes. Oocytes.

It is found in the cytoplasmic vesicle. The catalysed reaction is NAD(+) = cyclic ADP-beta-D-ribose + nicotinamide + H(+). It carries out the reaction nicotinate + NADP(+) = nicotinate-adenine dinucleotide phosphate + nicotinamide. The enzyme catalyses 2'-phospho-cyclic ADP-ribose + nicotinate = nicotinate-adenine dinucleotide phosphate. Its activity is regulated as follows. Activity is presumably regulated by its sequestration in vesicles before egg fertilization. After fertilization and upon NADase release, it could then be regulated via its potential phosphorylation sites. Synthesizes cyclic ADP-ribose (cADPR), a second messenger for calcium mobilization from endoplasmic reticulum; ADP-ribose is a minor product. Synthesizes the Ca(2+) mobilizer nicotinate-adenine dinucleotide phosphate from 2'-phospho-cADPR and nicotinic acid as well as from NADP(+) and nicotinic acid; with NADP(+) as substrate preferentially catalyzes NADP(+) hydrolysis rather than NAADP(+) synthesis, about 70-fold better at pH 7.4. Has cADPR hydrolase activity at very high enzyme concentrations, which is probably not physiological. The conversion of NAD(+) into ADP-ribose is also only observed at high enzyme concentrations and results from the hydrolysis of cADP-ribose. The chain is ADP-ribosyl cyclase/cyclic ADP-ribose hydrolase from Aplysia californica (California sea hare).